The following is a 369-amino-acid chain: tRNA/tmRNA (uracil-C(5))-methyltransferase (369 aa).

Residues Gln190, Tyr218, Asn223, Glu239, and Asp301 each coordinate S-adenosyl-L-methionine. The active-site Nucleophile is Cys326. Residue Glu360 is the Proton acceptor of the active site.

It belongs to the class I-like SAM-binding methyltransferase superfamily. RNA M5U methyltransferase family. TrmA subfamily.

It carries out the reaction uridine(54) in tRNA + S-adenosyl-L-methionine = 5-methyluridine(54) in tRNA + S-adenosyl-L-homocysteine + H(+). The enzyme catalyses uridine(341) in tmRNA + S-adenosyl-L-methionine = 5-methyluridine(341) in tmRNA + S-adenosyl-L-homocysteine + H(+). Functionally, dual-specificity methyltransferase that catalyzes the formation of 5-methyluridine at position 54 (m5U54) in all tRNAs, and that of position 341 (m5U341) in tmRNA (transfer-mRNA). The polypeptide is tRNA/tmRNA (uracil-C(5))-methyltransferase (Vibrio vulnificus (strain CMCP6)).